A 323-amino-acid chain; its full sequence is Elongation factor P--(R)-beta-lysine ligase (323 aa).

Position 76-78 (76-78 (SPE)) interacts with substrate. ATP-binding positions include 100 to 102 (RNE) and Asn-109. Tyr-118 provides a ligand contact to substrate. 242 to 243 (EL) provides a ligand contact to ATP. Position 249 (Glu-249) interacts with substrate. Residue Gly-298 coordinates ATP.

It belongs to the class-II aminoacyl-tRNA synthetase family. EpmA subfamily. Homodimer.

It catalyses the reaction D-beta-lysine + L-lysyl-[protein] + ATP = N(6)-((3R)-3,6-diaminohexanoyl)-L-lysyl-[protein] + AMP + diphosphate + H(+). Functionally, with EpmB is involved in the beta-lysylation step of the post-translational modification of translation elongation factor P (EF-P). Catalyzes the ATP-dependent activation of (R)-beta-lysine produced by EpmB, forming a lysyl-adenylate, from which the beta-lysyl moiety is then transferred to the epsilon-amino group of a conserved specific lysine residue in EF-P. This is Elongation factor P--(R)-beta-lysine ligase from Haemophilus influenzae (strain PittGG).